The chain runs to 299 residues: 4-diphosphocytidyl-2-C-methyl-D-erythritol kinase (299 aa).

Lys-11 is an active-site residue. Pro-94–Ser-104 lines the ATP pocket. Asp-136 is a catalytic residue.

The protein belongs to the GHMP kinase family. IspE subfamily.

It carries out the reaction 4-CDP-2-C-methyl-D-erythritol + ATP = 4-CDP-2-C-methyl-D-erythritol 2-phosphate + ADP + H(+). It functions in the pathway isoprenoid biosynthesis; isopentenyl diphosphate biosynthesis via DXP pathway; isopentenyl diphosphate from 1-deoxy-D-xylulose 5-phosphate: step 3/6. Catalyzes the phosphorylation of the position 2 hydroxy group of 4-diphosphocytidyl-2C-methyl-D-erythritol. This is 4-diphosphocytidyl-2-C-methyl-D-erythritol kinase from Bordetella parapertussis (strain 12822 / ATCC BAA-587 / NCTC 13253).